The chain runs to 552 residues: Urocanate hydratase (552 aa).

NAD(+)-binding positions include 49-50 (GG), Gln127, 173-175 (GMG), Glu193, Arg198, 239-240 (NA), 260-264 (QTSAH), 270-271 (YI), and Tyr319. Residue Cys407 is part of the active site. Gly489 contributes to the NAD(+) binding site.

This sequence belongs to the urocanase family. Requires NAD(+) as cofactor.

It is found in the cytoplasm. It catalyses the reaction 4-imidazolone-5-propanoate = trans-urocanate + H2O. It participates in amino-acid degradation; L-histidine degradation into L-glutamate; N-formimidoyl-L-glutamate from L-histidine: step 2/3. In terms of biological role, catalyzes the conversion of urocanate to 4-imidazolone-5-propionate. The sequence is that of Urocanate hydratase from Geobacillus sp. (strain WCH70).